A 957-amino-acid chain; its full sequence is Vacuolar membrane protease (957 aa).

Topologically, residues 1–10 are cytoplasmic; sequence MARYNPFSFT. The helical transmembrane segment at 11-31 threads the bilayer; sequence PGPVVFFTTVIYVGLFAALLV. At 32–369 the chain is on the vacuolar side; that stretch reads THLTVPDYPS…RVFVVFQLHT (338 aa). Residues Asn-48, Asn-105, and Asn-136 are each glycosylated (N-linked (GlcNAc...) asparagine). Zn(2+) is bound by residues His-152 and Asp-164. Glu-198 functions as the Proton acceptor in the catalytic mechanism. 3 residues coordinate Zn(2+): Glu-199, Glu-224, and His-297. The helical transmembrane segment at 370 to 390 threads the bilayer; the sequence is LFALCVTLLVVAPITLIGLTF. The Cytoplasmic segment spans residues 391-423; that stretch reads GLSKADKNYLLARKAFVYSSDDDNPVQLYGWRG. Residues 424–444 traverse the membrane as a helical segment; the sequence is FFRFPIIFISATAVVVALAYL. Topologically, residues 445–450 are vacuolar; that stretch reads LVRFNA. Residues 451–471 traverse the membrane as a helical segment; it reads FIIYSSPFAVWSMMLSAWFFV. The Cytoplasmic segment spans residues 472-490; it reads AWFFSRGADAMRPSALQRM. Residues 491–511 traverse the membrane as a helical segment; that stretch reads YALIWLFIGSFVLLTIVTVFV. Over 512–521 the chain is Vacuolar; sequence NNYQVVAGYP. Residues 522–542 traverse the membrane as a helical segment; that stretch reads ALFYFAVVFVAIMLSYLELFF. Topologically, residues 543 to 642 are cytoplasmic; it reads APTKSAYARH…YPGEQEWSGK (100 aa). Disordered regions lie at residues 559-586 and 603-627; these read SRRN…PVAD and FTRY…SQRL. Residues 603-613 show a composition bias toward basic and acidic residues; it reads FTRYGSRRDSA. A helical transmembrane segment spans residues 643–663; sequence LPSWIWIIQLLLLAPLVIVLV. Residues 664 to 685 are Vacuolar-facing; the sequence is GQVALLLTSALYQTPSDGNSPL. A helical transmembrane segment spans residues 686 to 706; the sequence is FIYLAIAALSVLLLAPTGPFI. Residues 707–713 lie on the Cytoplasmic side of the membrane; sequence HRFTYHV. A helical membrane pass occupies residues 714–734; that stretch reads PTFLFLVCLGTVIYNLVAFPF. Over 735-957 the chain is Vacuolar; it reads SRDHRLKVYF…LVEGFKRFEI (223 aa). N-linked (GlcNAc...) asparagine glycosylation is found at Asn-782, Asn-818, and Asn-834.

This sequence belongs to the peptidase M28 family. It depends on Zn(2+) as a cofactor.

Its subcellular location is the vacuole membrane. Its function is as follows. May be involved in vacuolar sorting and osmoregulation. This is Vacuolar membrane protease from Pyrenophora teres f. teres (strain 0-1) (Barley net blotch fungus).